The chain runs to 396 residues: 1-deoxy-D-xylulose 5-phosphate reductoisomerase (396 aa).

NADPH contacts are provided by threonine 10, glycine 11, serine 12, isoleucine 13, glycine 36, lysine 37, asparagine 38, and asparagine 124. Residue lysine 125 participates in 1-deoxy-D-xylulose 5-phosphate binding. Residue glutamate 126 participates in NADPH binding. Residue aspartate 150 coordinates Mn(2+). 1-deoxy-D-xylulose 5-phosphate-binding residues include serine 151, glutamate 152, serine 186, and histidine 209. Glutamate 152 serves as a coordination point for Mn(2+). NADPH is bound at residue glycine 215. Serine 222, asparagine 227, lysine 228, and glutamate 231 together coordinate 1-deoxy-D-xylulose 5-phosphate. Residue glutamate 231 coordinates Mn(2+).

Belongs to the DXR family. Mg(2+) serves as cofactor. Mn(2+) is required as a cofactor.

It carries out the reaction 2-C-methyl-D-erythritol 4-phosphate + NADP(+) = 1-deoxy-D-xylulose 5-phosphate + NADPH + H(+). It participates in isoprenoid biosynthesis; isopentenyl diphosphate biosynthesis via DXP pathway; isopentenyl diphosphate from 1-deoxy-D-xylulose 5-phosphate: step 1/6. In terms of biological role, catalyzes the NADPH-dependent rearrangement and reduction of 1-deoxy-D-xylulose-5-phosphate (DXP) to 2-C-methyl-D-erythritol 4-phosphate (MEP). The polypeptide is 1-deoxy-D-xylulose 5-phosphate reductoisomerase (Actinobacillus pleuropneumoniae serotype 3 (strain JL03)).